Consider the following 277-residue polypeptide: Zinc finger protein 511 (277 aa).

C2H2-type zinc fingers lie at residues 96 to 121 (FRCH…NALH), 123 to 146 (NVCS…LEWH), and 160 to 185 (YECL…IRTH). Residues 225–244 (ESSESMDFSLTPEPVETEPM) form a disordered region.

The protein belongs to the krueppel C2H2-type zinc-finger protein family.

The protein localises to the nucleus. In terms of biological role, may be involved in transcriptional regulation. This Danio rerio (Zebrafish) protein is Zinc finger protein 511 (znf511).